The following is a 633-amino-acid chain: ATP-dependent rRNA helicase SPB4 (633 aa).

Residues 11–39 carry the Q motif motif; sequence FSALTPALSEWIIDAVDAMGFVKTTPVQH. Residues 42-253 form the Helicase ATP-binding domain; it reads IPMFMKNSDV…RVGLRNPVRI (212 aa). 55–62 lines the ATP pocket; sequence AVTGSGKT. The span at 119 to 131 shows a compositional bias: acidic residues; it reads EPDDEDTDMEDAD. The segment at 119–140 is disordered; it reads EPDDEDTDMEDADTPPKPTFPP. Positions 201-204 match the DEAD box motif; sequence DEAD. The Helicase C-terminal domain occupies 292–446; sequence AMKKILSSLQ…EITVTDEDAK (155 aa). The stretch at 530–629 forms a coiled coil; it reads AYKDKAREKL…KQEAEDADFE (100 aa). Basic and acidic residues-rich tracts occupy residues 547–581 and 588–623; these read DKEE…EVRR and REHE…KQEA. A disordered region spans residues 547–633; that stretch reads DKEEGTKKKQ…EDADFEGFSD (87 aa). Acidic residues predominate over residues 624–633; that stretch reads EDADFEGFSD.

It belongs to the DEAD box helicase family. DDX55/SPB4 subfamily. Component of pre-60S ribosomal complexes.

The protein resides in the nucleus. It is found in the nucleolus. The enzyme catalyses ATP + H2O = ADP + phosphate + H(+). ATP-binding RNA helicase involved in the biogenesis of 60S ribosomal subunits. Binds 90S pre-ribosomal particles and dissociates from pre-60S ribosomal particles after processing of 27SB pre-rRNA. Required for the normal formation of 18S rRNA through the processing of pre-rRNAs at sites A0, A1 and A2, and the normal formation of 25S and 5.8S rRNAs through the processing of pre-rRNAs at sites C1 and C2. This chain is ATP-dependent rRNA helicase SPB4, found in Phaeosphaeria nodorum (strain SN15 / ATCC MYA-4574 / FGSC 10173) (Glume blotch fungus).